A 72-amino-acid polypeptide reads, in one-letter code: Translation initiation factor IF-1 (72 aa).

Positions 1-72 constitute an S1-like domain; sequence MAKEDVIEMQ…SKGRIVFRAR (72 aa).

This sequence belongs to the IF-1 family. In terms of assembly, component of the 30S ribosomal translation pre-initiation complex which assembles on the 30S ribosome in the order IF-2 and IF-3, IF-1 and N-formylmethionyl-tRNA(fMet); mRNA recruitment can occur at any time during PIC assembly.

The protein resides in the cytoplasm. One of the essential components for the initiation of protein synthesis. Stabilizes the binding of IF-2 and IF-3 on the 30S subunit to which N-formylmethionyl-tRNA(fMet) subsequently binds. Helps modulate mRNA selection, yielding the 30S pre-initiation complex (PIC). Upon addition of the 50S ribosomal subunit IF-1, IF-2 and IF-3 are released leaving the mature 70S translation initiation complex. In Vibrio cholerae serotype O1 (strain ATCC 39541 / Classical Ogawa 395 / O395), this protein is Translation initiation factor IF-1.